Here is a 341-residue protein sequence, read N- to C-terminus: Glycerol-3-phosphate dehydrogenase [NAD(P)+] (341 aa).

The NADPH site is built by Ser15, Trp16, Arg36, and Lys110. Sn-glycerol 3-phosphate-binding residues include Lys110, Gly139, and Ser141. Ala143 is a binding site for NADPH. 5 residues coordinate sn-glycerol 3-phosphate: Lys194, Asp247, Ser257, Arg258, and Asn259. The active-site Proton acceptor is the Lys194. Arg258 is a binding site for NADPH. 2 residues coordinate NADPH: Val282 and Glu284.

This sequence belongs to the NAD-dependent glycerol-3-phosphate dehydrogenase family.

Its subcellular location is the cytoplasm. It carries out the reaction sn-glycerol 3-phosphate + NAD(+) = dihydroxyacetone phosphate + NADH + H(+). The catalysed reaction is sn-glycerol 3-phosphate + NADP(+) = dihydroxyacetone phosphate + NADPH + H(+). The protein operates within membrane lipid metabolism; glycerophospholipid metabolism. Catalyzes the reduction of the glycolytic intermediate dihydroxyacetone phosphate (DHAP) to sn-glycerol 3-phosphate (G3P), the key precursor for phospholipid synthesis. This Stenotrophomonas maltophilia (strain R551-3) protein is Glycerol-3-phosphate dehydrogenase [NAD(P)+].